Consider the following 715-residue polypeptide: Serrate RNA effector molecule homolog (715 aa).

Disordered stretches follow at residues 1-87 (MDSD…YSGP), 223-259 (ENKD…TDKA), and 629-715 (EPKH…DDIP). 3 stretches are compositionally biased toward basic and acidic residues: residues 7–25 (GDRR…DSYR), 37–57 (YDNK…SRGD), and 223–242 (ENKD…VKEE). A compositionally biased stretch (acidic residues) spans 243-256 (PNEEQEEGAIDDET). Positions 629–659 (EPKHMPHMSRDDHRGGGGDRGYGRERDDDRG) are enriched in basic and acidic residues.

It belongs to the ARS2 family.

The protein resides in the nucleus. Its function is as follows. Acts as a mediator between the cap-binding complex (CBC) and the primary microRNAs (miRNAs) processing machinery. Contributes to the stability and delivery of capped primary miRNA transcripts to the primary miRNA processing complex, thereby playing a role in RNA-mediated gene silencing (RNAi) by miRNAs. The sequence is that of Serrate RNA effector molecule homolog from Caenorhabditis briggsae.